The following is a 272-amino-acid chain: Small ribosomal subunit biogenesis GTPase RsgA (272 aa).

One can recognise a CP-type G domain in the interval 56-207; sequence KNILIRPKVA…IIDTPGFSSI (152 aa). GTP is bound by residues 105–108 and 151–159; these read TKAD and GQSGVGKTT. Zn(2+) is bound by residues Cys230, Cys235, His237, and Cys245.

It belongs to the TRAFAC class YlqF/YawG GTPase family. RsgA subfamily. In terms of assembly, monomer. Associates with 30S ribosomal subunit, binds 16S rRNA. Zn(2+) is required as a cofactor.

It localises to the cytoplasm. One of several proteins that assist in the late maturation steps of the functional core of the 30S ribosomal subunit. Helps release RbfA from mature subunits. May play a role in the assembly of ribosomal proteins into the subunit. Circularly permuted GTPase that catalyzes slow GTP hydrolysis, GTPase activity is stimulated by the 30S ribosomal subunit. The protein is Small ribosomal subunit biogenesis GTPase RsgA of Mycoplasmopsis pulmonis (strain UAB CTIP) (Mycoplasma pulmonis).